Consider the following 81-residue polypeptide: Small ribosomal subunit protein uS17 (81 aa).

The protein belongs to the universal ribosomal protein uS17 family. Part of the 30S ribosomal subunit.

Its function is as follows. One of the primary rRNA binding proteins, it binds specifically to the 5'-end of 16S ribosomal RNA. This is Small ribosomal subunit protein uS17 from Trichormus variabilis (strain ATCC 29413 / PCC 7937) (Anabaena variabilis).